The sequence spans 300 residues: MPPSGRKVSPSVSVVAGATAGAVEGVATFPIEYLKTVSQFAPRDVHGNQQRLSPIEVVRSTLQKEGPKGLFRGCTAMVVGNAGKAGVRFFAFENFRSMLKNKSTGKLSNSSNYLAGMGAGTLEAIFAVTPSETIKTKLIDDSKRAKPRYEQGLVRGTASIVRQEGLAGIYQGVVPVVMRQGSASAIRLGTYSALRDWLPKAHGSGSSLINWLATFSIGAASGVVAVYGTMPFDVLKTRMQAIDAARYRSTWHCLTNTLKTEGAAALWRGSVSRSMRLIVSGGVIFSVYEQVVWLLAGPES.

3 Solcar repeats span residues 8–98, 107–197, and 209–294; these read VSPS…FRSM, LSNS…LRDW, and INWL…VVWL. 6 consecutive transmembrane segments (helical) span residues 11 to 31, 67 to 87, 114 to 134, 172 to 191, 208 to 228, and 277 to 297; these read SVSV…TFPI, PKGL…KAGV, LAGM…SETI, GVVP…LGTY, LINW…AVYG, and LIVS…LLAG.

This sequence belongs to the mitochondrial carrier (TC 2.A.29) family.

It localises to the mitochondrion membrane. Mitochondrial tricarboxylate transporter; part of the gene cluster that mediates the biosynthesis of itaconic acid and 2-hydroxyparaconate. Cis-aconitate is secreted by the mitochondrial tricarboxylate transporter MTT1. In the cytosol cis-aconitate is converted into trans-aconitate via isomerization by the aconitate-delta-isomerase ADI1. Decarboxylation of trans-aconitate by the trans-aconitate decarboxylase TAD1 then leads then to the production of itaconic acid. The cytochrome P450 monooxygenase CYP3 further converts itaconate to 2-hydroxyparaconate via oxidation of the double bond, leading to a transient epoxide, which can subsequently be lactonized to produce 2-hydroxyparaconate. Secretion of itaconate and possibly 2-hydroxyparaconate into the medium is mediated by the major facilitator ITP1. The glyoxalase domain-containing protein RDO1 is not involved in the biosynthesis of itaconate and 2-hydroxyparaconate, however, it might play a role in the further conversion of 2-hydroxyparaconate to itatartarate. The protein is Mitochondrial tricarboxylate transporter 1 of Mycosarcoma maydis (Corn smut fungus).